An 87-amino-acid polypeptide reads, in one-letter code: Putative defensin-like protein 231 (87 aa).

The N-terminal stretch at 1–26 is a signal peptide; that stretch reads MKFATCFLVSYVLVFLVLSVCKEVEA. 4 disulfides stabilise this stretch: C30/C85, C40/C66, C48/C79, and C64/C81.

It belongs to the DEFL family.

The protein resides in the secreted. In Arabidopsis thaliana (Mouse-ear cress), this protein is Putative defensin-like protein 231 (SCRL25).